Here is a 252-residue protein sequence, read N- to C-terminus: HTH-type transcriptional regulator XynR (252 aa).

The 63-residue stretch at 4 to 66 (IQSVERALQI…PENGKYRLGM (63 aa)) folds into the HTH iclR-type domain. The H-T-H motif DNA-binding region spans 25 to 45 (KITDISKLMGLSKSTLHSLLK). Residues 81–250 (IRQKAKGWLT…GLALSRALGY (170 aa)) form the IclR-ED domain.

Its activity is regulated as follows. Activity may be controlled by xylonate. In terms of biological role, involved in regulation of xylonate catabolism. Represses the expression of both yagA and yagEF operons. Binds mainly at a single site within the spacer of the bidirectional transcription units yagA and yagEF. This chain is HTH-type transcriptional regulator XynR, found in Escherichia coli (strain K12).